The chain runs to 374 residues: tRNA-specific 2-thiouridylase MnmA (374 aa).

Residues 10-17 (AMSGGVDS) and L36 contribute to the ATP site. The active-site Nucleophile is the C111. A disulfide bond links C111 and C209. ATP is bound at residue G135. The segment at 159–161 (KDQ) is interaction with tRNA. C209 acts as the Cysteine persulfide intermediate in catalysis.

It belongs to the MnmA/TRMU family.

It localises to the cytoplasm. The enzyme catalyses S-sulfanyl-L-cysteinyl-[protein] + uridine(34) in tRNA + AH2 + ATP = 2-thiouridine(34) in tRNA + L-cysteinyl-[protein] + A + AMP + diphosphate + H(+). Its function is as follows. Catalyzes the 2-thiolation of uridine at the wobble position (U34) of tRNA, leading to the formation of s(2)U34. The chain is tRNA-specific 2-thiouridylase MnmA from Acidobacterium capsulatum (strain ATCC 51196 / DSM 11244 / BCRC 80197 / JCM 7670 / NBRC 15755 / NCIMB 13165 / 161).